The primary structure comprises 306 residues: Homoserine O-succinyltransferase (306 aa).

The active-site Acyl-thioester intermediate is the cysteine 142. Substrate is bound by residues lysine 163 and serine 192. Histidine 233 serves as the catalytic Proton acceptor. Glutamate 235 is a catalytic residue. Residue arginine 247 participates in substrate binding.

Belongs to the MetA family.

Its subcellular location is the cytoplasm. It catalyses the reaction L-homoserine + succinyl-CoA = O-succinyl-L-homoserine + CoA. It functions in the pathway amino-acid biosynthesis; L-methionine biosynthesis via de novo pathway; O-succinyl-L-homoserine from L-homoserine: step 1/1. In terms of biological role, transfers a succinyl group from succinyl-CoA to L-homoserine, forming succinyl-L-homoserine. This chain is Homoserine O-succinyltransferase, found in Pelagibacterium halotolerans (strain DSM 22347 / JCM 15775 / CGMCC 1.7692 / B2).